Reading from the N-terminus, the 70-residue chain is DNA gyrase inhibitor YacG (70 aa).

Cysteine 9, cysteine 12, cysteine 28, and cysteine 32 together coordinate Zn(2+). The segment at 43–70 is disordered; the sequence is ESRKIPGSSIDPESIVTSNNKQDNVDEQ.

The protein belongs to the DNA gyrase inhibitor YacG family. Interacts with GyrB. The cofactor is Zn(2+).

Functionally, inhibits all the catalytic activities of DNA gyrase by preventing its interaction with DNA. Acts by binding directly to the C-terminal domain of GyrB, which probably disrupts DNA binding by the gyrase. This chain is DNA gyrase inhibitor YacG, found in Legionella pneumophila (strain Lens).